The following is a 91-amino-acid chain: DNA-directed RNA polymerase subunit omega (91 aa).

This sequence belongs to the RNA polymerase subunit omega family. In terms of assembly, the RNAP catalytic core consists of 2 alpha, 1 beta, 1 beta' and 1 omega subunit. When a sigma factor is associated with the core the holoenzyme is formed, which can initiate transcription.

The enzyme catalyses RNA(n) + a ribonucleoside 5'-triphosphate = RNA(n+1) + diphosphate. In terms of biological role, promotes RNA polymerase assembly. Latches the N- and C-terminal regions of the beta' subunit thereby facilitating its interaction with the beta and alpha subunits. In Pectobacterium carotovorum subsp. carotovorum (strain PC1), this protein is DNA-directed RNA polymerase subunit omega.